A 190-amino-acid chain; its full sequence is Copper-binding lipoprotein NosL (190 aa).

The N-terminal stretch at 1-23 (MNALHRIGAGTLLAVLLAFGLTG) is a signal peptide. The N-palmitoyl cysteine moiety is linked to residue cysteine 24. Cysteine 24 carries S-diacylglycerol cysteine lipidation. A disordered region spans residues 170 to 190 (MQHGGMHDHAPNGAHNAHAGH). Residues 180–190 (PNGAHNAHAGH) are compositionally biased toward low complexity.

It belongs to the NosL family. Monomer.

It localises to the cell membrane. Its function is as follows. May act as a metallochaperone involved in nitrous oxide reductase assembly. Specifically binds Cu(+). The protein is Copper-binding lipoprotein NosL of Stutzerimonas stutzeri (Pseudomonas stutzeri).